Consider the following 255-residue polypeptide: NAD kinase (255 aa).

Asp-44 acts as the Proton acceptor in catalysis. Residues 44–45, His-49, 114–115, Asp-144, Ala-152, 155–160, and Gln-216 each bind NAD(+); these read DG, NE, and SAYNLS.

Belongs to the NAD kinase family. The cofactor is a divalent metal cation.

It localises to the cytoplasm. It catalyses the reaction NAD(+) + ATP = ADP + NADP(+) + H(+). Involved in the regulation of the intracellular balance of NAD and NADP, and is a key enzyme in the biosynthesis of NADP. Catalyzes specifically the phosphorylation on 2'-hydroxyl of the adenosine moiety of NAD to yield NADP. The polypeptide is NAD kinase (Rickettsia canadensis (strain McKiel)).